A 203-amino-acid chain; its full sequence is Cilia- and flagella-associated protein 20 (203 aa).

It belongs to the CFAP20 family.

The protein localises to the nucleus. It localises to the cytoplasm. Its subcellular location is the cytoskeleton. It is found in the microtubule organizing center. The protein resides in the centrosome. The protein localises to the centriole. It localises to the cilium basal body. Its subcellular location is the cilium axoneme. Its function is as follows. Cilium- and flagellum-specific protein that plays a role in axonemal structure organization and motility. Microtubule inner protein (MIP) part of the dynein-decorated doublet microtubules (DMTs) in cilia axoneme, which is required for motile cilia beating. Involved in the regulation of the size and morphology of cilia. Required for axonemal microtubules polyglutamylation. The protein is Cilia- and flagella-associated protein 20 of Caenorhabditis briggsae.